Reading from the N-terminus, the 30-residue chain is Ranatuerin-2OK (30 aa).

A disulfide bond links cysteine 23 and cysteine 30.

Expressed by the skin glands.

It is found in the secreted. In terms of biological role, antimicrobial peptide. Active against Gram-negative bacterium E.coli (MIC=12.5 uM) and against Gram-positive bacterium S.aureus (MIC=50 uM). The protein is Ranatuerin-2OK of Nidirana okinavana (Kampira Falls frog).